The following is a 119-amino-acid chain: Holo-[acyl-carrier-protein] synthase (119 aa).

The Mg(2+) site is built by Asp8 and Glu58.

Belongs to the P-Pant transferase superfamily. AcpS family. Requires Mg(2+) as cofactor.

It localises to the cytoplasm. It catalyses the reaction apo-[ACP] + CoA = holo-[ACP] + adenosine 3',5'-bisphosphate + H(+). In terms of biological role, transfers the 4'-phosphopantetheine moiety from coenzyme A to a Ser of acyl-carrier-protein. This Streptococcus thermophilus (strain ATCC BAA-491 / LMD-9) protein is Holo-[acyl-carrier-protein] synthase.